The chain runs to 492 residues: MRKALLSVSDKTGIIPFAERLTELDFELYSTGGTKKALEDNDIAVKSVSELTNFPEIMDGRVKTLHPNIHGGILADRNNPEHIKAMETHGIQPLDLVVVNLYPFEATVANPDVTEMDAIENIDIGGPTMLRSSAKNFRHVITVVDPADYDEVIEKLKTDTLDETFRKQLMIKVFTHTNKYDAAIVNFFSDNTSTLRYGENPHQKARFIKTDAKPNTLAGARVLHGKPLSFNNIKDADATLFLVKQFDMPAAVAVKHMNPCGVGTGEVISEAFQNAYDADSQSIFGGIVALNREVDKATAEKMHAIFLEVIIAPKFSDEALEILTAKKNIRLLEIDMDMDKDEEEFVSVSGGYLVQDKDLLNVTREDMRVVTNTEPTEAQWKAIELGWKVVKSVKSNAIVLANDKQTVGIGAGQMNRVGAAKIAIERAIEMNDNVVLASDGFFPMSDTVETAYAAGIKCIVQPGGSIKDQDSIDKANEYGIAMVMTDVRHFKH.

One can recognise an MGS-like domain in the interval 1–144 (MRKALLSVSD…KNFRHVITVV (144 aa)).

The protein belongs to the PurH family.

The enzyme catalyses (6R)-10-formyltetrahydrofolate + 5-amino-1-(5-phospho-beta-D-ribosyl)imidazole-4-carboxamide = 5-formamido-1-(5-phospho-D-ribosyl)imidazole-4-carboxamide + (6S)-5,6,7,8-tetrahydrofolate. The catalysed reaction is IMP + H2O = 5-formamido-1-(5-phospho-D-ribosyl)imidazole-4-carboxamide. It functions in the pathway purine metabolism; IMP biosynthesis via de novo pathway; 5-formamido-1-(5-phospho-D-ribosyl)imidazole-4-carboxamide from 5-amino-1-(5-phospho-D-ribosyl)imidazole-4-carboxamide (10-formyl THF route): step 1/1. The protein operates within purine metabolism; IMP biosynthesis via de novo pathway; IMP from 5-formamido-1-(5-phospho-D-ribosyl)imidazole-4-carboxamide: step 1/1. This is Bifunctional purine biosynthesis protein PurH from Macrococcus caseolyticus (strain JCSC5402) (Macrococcoides caseolyticum).